The sequence spans 350 residues: Glyceraldehyde-3-phosphate dehydrogenase (350 aa).

NAD(+)-binding positions include 13–14 (TI) and glycine 118. 147–149 (SCN) lines the D-glyceraldehyde 3-phosphate pocket. Cysteine 148 functions as the Nucleophile in the catalytic mechanism. Arginine 176 serves as a coordination point for NAD(+). 202 to 203 (HG) contributes to the D-glyceraldehyde 3-phosphate binding site. NAD(+) is bound at residue glutamine 309. A disordered region spans residues 327 to 350 (LEEDPEASMDATDSALGVLNSPPL).

Belongs to the glyceraldehyde-3-phosphate dehydrogenase family. In terms of assembly, homotetramer.

It localises to the cytoplasm. The catalysed reaction is D-glyceraldehyde 3-phosphate + phosphate + NADP(+) = (2R)-3-phospho-glyceroyl phosphate + NADPH + H(+). It carries out the reaction D-glyceraldehyde 3-phosphate + phosphate + NAD(+) = (2R)-3-phospho-glyceroyl phosphate + NADH + H(+). The protein operates within carbohydrate degradation; glycolysis; pyruvate from D-glyceraldehyde 3-phosphate: step 1/5. This chain is Glyceraldehyde-3-phosphate dehydrogenase, found in Methanopyrus kandleri (strain AV19 / DSM 6324 / JCM 9639 / NBRC 100938).